Reading from the N-terminus, the 433-residue chain is Ligand-dependent corepressor (433 aa).

The disordered stretch occupies residues 1 to 51 (MQRMIQQFAAEYTSKNSSTQDPSQPNSTKNQSLPKASPVTTSPTAATTQNP). Residues 13-34 (TSKNSSTQDPSQPNSTKNQSLP) are compositionally biased toward polar residues. Residues 36 to 48 (ASPVTTSPTAATT) are compositionally biased toward low complexity. S42 carries the phosphoserine modification. The Interaction with nuclear receptors motif lies at 53–57 (LSKLL). Phosphoserine is present on S63. The tract at residues 64–147 (PLDLTVRKSQ…GTREGFGHST (84 aa)) is disordered. Positions 93 to 110 (AGSTSLSHSPGCSSTQGN) are enriched in polar residues. S249 carries the phosphoserine modification. Residue K254 forms a Glycyl lysine isopeptide (Lys-Gly) (interchain with G-Cter in SUMO2) linkage. A disordered region spans residues 299 to 348 (QSRKSMLDAGPDSWGSDAEQSTSGQPYPTSDQEGDPGSKQPRKKRGRYRQ). The span at 316 to 329 (AEQSTSGQPYPTSD) shows a compositional bias: polar residues. The Nuclear localization signal motif lies at 339–345 (PRKKRGR). An HTH psq-type domain is found at 340–392 (RKKRGRYRQYNSEILEEAISVVMSGKMSVSKAQSIYGIPHSTLEYKVKERLGT). A Glycyl lysine isopeptide (Lys-Gly) (interchain with G-Cter in SUMO2) cross-link involves residue R345. A DNA-binding region (H-T-H motif) is located at residues 368–388 (VSKAQSIYGIPHSTLEYKVKE). Residue G391 forms a Glycyl lysine isopeptide (Lys-Gly) (interchain with G-Cter in SUMO2) linkage. Residues 393 to 412 (LKNPPKKKMKLMRSEGPDVS) form a disordered region. Residue K414 forms a Glycyl lysine isopeptide (Lys-Gly) (interchain with G-Cter in SUMO2) linkage.

In terms of assembly, interacts with ESR1 and ESR2 in the presence of estradiol. Interacts with CTBP1, HDAC3 and HDAC6. Component of a large corepressor complex that contains about 20 proteins, including CTBP1, CTBP2, HDAC1 and HDAC2. Ubiquitous.

It is found in the nucleus. May act as transcription activator that binds DNA elements with the sequence 5'-CCCTATCGATCGATCTCTACCT-3'. Repressor of ligand-dependent transcription activation by target nuclear receptors. Repressor of ligand-dependent transcription activation by ESR1, ESR2, NR3C1, PGR, RARA, RARB, RARG, RXRA and VDR. The chain is Ligand-dependent corepressor from Homo sapiens (Human).